The primary structure comprises 137 residues: Global transcriptional regulator Spx (137 aa).

Cys-10 and Cys-13 form a disulfide bridge.

Belongs to the ArsC family. Spx subfamily. As to quaternary structure, interacts with the C-terminal domain of the alpha subunit of the RNAP.

The protein localises to the cytoplasm. Functionally, global transcriptional regulator that plays a key role in stress response and exerts either positive or negative regulation of genes. Acts by interacting with the C-terminal domain of the alpha subunit of the RNA polymerase (RNAP). This interaction can enhance binding of RNAP to the promoter region of target genes and stimulate their transcription, or block interaction of RNAP with activator. In Streptococcus mutans serotype c (strain ATCC 700610 / UA159), this protein is Global transcriptional regulator Spx.